The sequence spans 707 residues: MEERTFEMELAGRKLVVQTGKVAQQANGAAWVKYGDTVVLVTACASKEPREGIDFFPLTVEYEERLYSIGKIPGGFIKREGKPSEKAILSARLIDRPIRPLFPEGYRNDVQVIATVLSVDPDAQPEIVAMIGSSVALSISDIPFNGPTGSVAVGLVDGKFVINPTYEQREKSLMHLVVSGTKDAIVMVEAGAKEVPEETILDAIVYAHQYIKQIVEFIEGIVKEVGVPKAEVVLHEIDKELEEKVRAYATEKIYNALRTPEKKERNDNLDKVEQEVLEHFKDEYPDNLADIDEVLYKIMKEQMRKMIKEEKIRVDGRGLDDIRPIWCEVGVLPRTHGSAIFTRGQTQVLTVATLGAIGDIQILEGIGDEEFKRYMHHYNFPPYSVGEVRPLRGPGRREIGHGALAERALEPVIPSEEEFPYTIRLVSEVLSSNGSTSQASVCGSTLALMDAGVPIKAPVAGIAMGLIKEEDEVLILTDIQGIEDFLGDMDFKVAGTEKGVTAIQMDIKIPGIDRDILQMALEKARKARLYVLQKMLEVIKEPRKELSKYAPRVVRMVVNPEKIRDIIGPAGKTITKIISETGVKIDIEEDGRLYITAPNLEAGERAKQMIEAITKDIEVGGIYLGKVLRIAPFGAFVEIAPGKEGLVHISNLSKKRVRRVEDVVKVGDNILVKVTEIDKLGRIVLSRKDAMPDEEESDNRKSDNRKK.

Mg(2+) contacts are provided by aspartate 484 and aspartate 490. The 60-residue stretch at proline 551–isoleucine 610 folds into the KH domain. One can recognise an S1 motif domain in the interval glycine 620 to lysine 688. Residues lysine 688–lysine 707 form a disordered region. A compositionally biased stretch (basic and acidic residues) spans aspartate 698–lysine 707.

Belongs to the polyribonucleotide nucleotidyltransferase family. Mg(2+) serves as cofactor.

It is found in the cytoplasm. The enzyme catalyses RNA(n+1) + phosphate = RNA(n) + a ribonucleoside 5'-diphosphate. Its function is as follows. Involved in mRNA degradation. Catalyzes the phosphorolysis of single-stranded polyribonucleotides processively in the 3'- to 5'-direction. The polypeptide is Polyribonucleotide nucleotidyltransferase (Caldanaerobacter subterraneus subsp. tengcongensis (strain DSM 15242 / JCM 11007 / NBRC 100824 / MB4) (Thermoanaerobacter tengcongensis)).